A 361-amino-acid chain; its full sequence is 1-deoxy-D-xylulose 5-phosphate reductoisomerase (361 aa).

The NADPH site is built by Thr-12, Gly-13, Ser-14, Ile-15, Gly-38, and Asn-102. Lys-103 is a 1-deoxy-D-xylulose 5-phosphate binding site. Glu-104 is an NADPH binding site. Position 126 (Asp-126) interacts with Mn(2+). Ser-127, Glu-128, Ser-152, and His-175 together coordinate 1-deoxy-D-xylulose 5-phosphate. Glu-128 is a Mn(2+) binding site. Gly-181 serves as a coordination point for NADPH. 1-deoxy-D-xylulose 5-phosphate-binding residues include Ser-188, Asn-193, Lys-194, and Glu-197. Glu-197 provides a ligand contact to Mn(2+).

The protein belongs to the DXR family. The cofactor is Mg(2+). Requires Mn(2+) as cofactor.

The enzyme catalyses 2-C-methyl-D-erythritol 4-phosphate + NADP(+) = 1-deoxy-D-xylulose 5-phosphate + NADPH + H(+). It participates in isoprenoid biosynthesis; isopentenyl diphosphate biosynthesis via DXP pathway; isopentenyl diphosphate from 1-deoxy-D-xylulose 5-phosphate: step 1/6. In terms of biological role, catalyzes the NADPH-dependent rearrangement and reduction of 1-deoxy-D-xylulose-5-phosphate (DXP) to 2-C-methyl-D-erythritol 4-phosphate (MEP). The protein is 1-deoxy-D-xylulose 5-phosphate reductoisomerase of Leifsonia xyli subsp. xyli (strain CTCB07).